Here is a 1107-residue protein sequence, read N- to C-terminus: MFSRKKRELMKTPSLSKKSRAGSPAPQNDLTRKDVTDSSNDLASSPPSNSSPVSSGTLKRPSSLSRHASAAGIPLSSPRGKATKPASTPSPPESGEGPFIDVEDISQLLGDVARFAERLEKLRDVVQDEELKETRRPLAHECLGEALRLLRQVINKYPLLNTVETLTAAGTLISKVKGFHYESSIENDKRDFEKALESMAVCFSSTISEFLMGEVDSSTLLSLPPGDQSQSMESLCGGLSGGEGALPSAHEYVEAGGHLGEDVDVILQRSDGGVQAALLYAKNMAKYLKDLSSYIEKRTILEMEYAKGLQKLVNAYKGTLNQETHMPFQSIYSVALEQDLEHGHGILHTALTLQHQTFLQPINMRRQEHEKRRKEVKEQWQRAQRKLMEAESNLRKARQAYMQRSEEHERALYNATRAEEEQSHSGTRSLDKKRRAEEEAKNRAEEAMATYRTCIADAKTQKQELEDVKVNVLRQLQELIKQSDQILRSATISYYQSMHMQTAPLPVGFQMLCESSKLYDLGQQYASYVRQLGAVNEPETSYDFQPYTPQITWSPCIRARKSSFNSQDIPSSENKEISGEERGVERRGGRGHQVHKSWPTAITEGDPAVSSATVPAFPEKLHQPLSPTENVDQKRLSASFEQSINGLSGSLEVQNSTGPFRNIGLSRAALTHRLRKLRTPSKCRECNSYVYFQGAECEECSLACHKKCLETLAIQCGHKKLQGRLLLFGRDFSETALRSPDHIPFLIRKCVSEIEERALIMKGIYRVNGVKTRVEKLCQAFENGKELVELSQASPHDLSNVLKLYLRQLPEPLIPFRLYNGLMGLAKESLRGTETGKGPRLQDKGPNTETDVLSIVVQLKELLQDLPSENRTTLQYLVKHLCRVSEQEQLNKMSPSNLGIVFGPALMRPRPTDATVSLSSLVDYPHQARIVETLIIFYSTIFQEPVSNTDIGTGNSSSDDTASMQSRARLQVTVEEDLSELTPEYQIPVFKEPGASTVESDSESDGAEDIPGTWKPQTTRGHLTKEASVTSAEDIPYIEGEAQSESEEDRDQTQENLAENNTNQSNNVAVNGHCCVPHFHCHTQLPAIRMMHGKIYVSSADRRPHFV.

The disordered stretch occupies residues 1–99; the sequence is MFSRKKRELM…SPPESGEGPF (99 aa). A compositionally biased stretch (low complexity) spans 37–55; that stretch reads DSSNDLASSPPSNSSPVSS. Positions 56 to 66 are enriched in polar residues; sequence GTLKRPSSLSR. Coiled-coil stretches lie at residues 103–132 and 363–485; these read EDISQLLGDVARFAERLEKLRDVVQDEELK and NMRR…QSDQ. The region spanning 261-524 is the F-BAR domain; sequence EDVDVILQRS…SSKLYDLGQQ (264 aa). Basic and acidic residues-rich tracts occupy residues 414–423, 434–444, and 573–588; these read NATRAEEEQS, RRAEEEAKNRA, and ENKEISGEERGVERRG. Disordered stretches follow at residues 414 to 444 and 564 to 595; these read NATRAEEEQSHSGTRSLDKKRRAEEEAKNRA and FNSQDIPSSENKEISGEERGVERRGGRGHQVH. Residues 671 to 716 form a Phorbol-ester/DAG-type zinc finger; sequence THRLRKLRTPSKCRECNSYVYFQGAECEECSLACHKKCLETLAIQC. Residues 730-942 form the Rho-GAP domain; the sequence is RDFSETALRS…TLIIFYSTIF (213 aa). Residues 981 to 1036 are disordered; the sequence is LTPEYQIPVFKEPGASTVESDSESDGAEDIPGTWKPQTTRGHLTKEASVTSAEDIP. Residues 1015 to 1031 are compositionally biased toward polar residues; it reads KPQTTRGHLTKEASVTS.

It localises to the cytoplasm. The protein localises to the cell projection. It is found in the ruffle membrane. Its function is as follows. Contains a GTPase activator for the Rho-type GTPases (RhoGAP) domain that would be able to negatively regulate the actin cytoskeleton as well as cell spreading. However, also contains N-terminally a BAR-domin which is able to play an autoinhibitory effect on this RhoGAP activity. The protein is Rho GTPase-activating protein 45 of Xenopus laevis (African clawed frog).